The sequence spans 222 residues: UPF0758 protein CT0611 (222 aa).

An MPN domain is found at 100 to 222; the sequence is KVKGARDVFE…WFSFRDHALL (123 aa). Zn(2+)-binding residues include H171, H173, and D184. Residues 171–184 carry the JAMM motif motif; that stretch reads HNHPSGDVQPSNAD.

It belongs to the UPF0758 family.

This chain is UPF0758 protein CT0611, found in Chlorobaculum tepidum (strain ATCC 49652 / DSM 12025 / NBRC 103806 / TLS) (Chlorobium tepidum).